Here is a 339-residue protein sequence, read N- to C-terminus: MAHVAEWKKKEVEELTNIIKSYPVIALVDVANVPAYPLSKMREKLRGKALLRVSRNTLIELAIKRAAQELGKPELEKLIDHIQGGAGILATEMNPFKLYKLLEESKTPAPAKPGVPVPRDVVIPAGPTSISPGPLVGEMQALGIPARIEKGKVSIQKDYTVLKAGEVITEQLARILNALGIEPLEVGLNLLAAYEDGIVYTPEVLAIDEEEYINLLQQAYMHAFNLSVNTAYPTSQTIEAIIQKAYLGAKNVAVEAGYITPETVEDIFGRALRAVLLIAQNLPEELLDEKTKELLNQQAQIAVATQPQQEEKVEEAEEEEEEEEASEEDALAGLGALFG.

Residues 305-339 are disordered; sequence TQPQQEEKVEEAEEEEEEEEASEEDALAGLGALFG. A compositionally biased stretch (acidic residues) spans 312–330; the sequence is KVEEAEEEEEEEEASEEDA.

The protein belongs to the universal ribosomal protein uL10 family. As to quaternary structure, part of the 50S ribosomal subunit. Forms part of the ribosomal stalk which helps the ribosome interact with GTP-bound translation factors. Forms a heptameric L10(L12)2(L12)2(L12)2 complex, where L10 forms an elongated spine to which the L12 dimers bind in a sequential fashion.

Functionally, forms part of the ribosomal stalk, playing a central role in the interaction of the ribosome with GTP-bound translation factors. The protein is Large ribosomal subunit protein uL10 of Thermococcus onnurineus (strain NA1).